The chain runs to 608 residues: Glutamine--fructose-6-phosphate aminotransferase [isomerizing] (608 aa).

The Nucleophile; for GATase activity role is filled by cysteine 2. The region spanning 2-217 (CGIVGYSGKK…DKEFVVLTSE (216 aa)) is the Glutamine amidotransferase type-2 domain. SIS domains follow at residues 285-424 (TKEQ…NKNT) and 453-598 (KVQK…VDKP). The For Fru-6P isomerization activity role is filled by lysine 603.

Homodimer.

The protein resides in the cytoplasm. It carries out the reaction D-fructose 6-phosphate + L-glutamine = D-glucosamine 6-phosphate + L-glutamate. Catalyzes the first step in hexosamine metabolism, converting fructose-6P into glucosamine-6P using glutamine as a nitrogen source. This chain is Glutamine--fructose-6-phosphate aminotransferase [isomerizing], found in Clostridium acetobutylicum (strain ATCC 824 / DSM 792 / JCM 1419 / IAM 19013 / LMG 5710 / NBRC 13948 / NRRL B-527 / VKM B-1787 / 2291 / W).